Reading from the N-terminus, the 247-residue chain is TLC domain-containing protein 1 (247 aa).

The signal sequence occupies residues 1-35 (MPRLLHPALPLLLGATLTFRALRRALCRLPLPVHV). Over 36–46 (RADPLRTWRWH) the chain is Extracellular. In terms of domain architecture, TLC spans 40–234 (LRTWRWHNLL…LLRSDFCPEH (195 aa)). A helical membrane pass occupies residues 47 to 67 (NLLVSFAHSIVSGIWALLCVW). The Cytoplasmic segment spans residues 68-83 (QTPDMLVEIETAWSLS). A helical membrane pass occupies residues 84-104 (GYLLVCFSAGYFIHDTVDIVA). Residues 105–123 (SGQTRASWEYLVHHVMAMG) are Extracellular-facing. The segment at residues 124 to 144 (AFFSGIFWSSFVGGGVLTLLV) is an intramembrane region (helical). Topologically, residues 145–173 (EVSNIFLTIRMMMKISNAQDHLLYRVNKY) are extracellular. The chain crosses the membrane as a helical span at residues 174 to 194 (VNLVMYFLFRLAPQAYLTHFF). Residues 195–201 (LRYVNQR) are Cytoplasmic-facing. The helical transmembrane segment at 202–222 (TLGTFLLGILLMLDVMIIIYF) threads the bilayer. The Extracellular portion of the chain corresponds to 223–247 (SRLLRSDFCPEHVPKKQHKDKFLTE).

It is found in the cell membrane. Regulates the composition and fluidity of the plasma membrane. Inhibits the incorporation of membrane-fluidizing phospholipids containing omega-3 long-chain polyunsaturated fatty acids (LCPUFA) and thereby promotes membrane rigidity. Does not appear to have any effect on LCPUFA synthesis. This is TLC domain-containing protein 1 (TLCD1) from Homo sapiens (Human).